A 214-amino-acid chain; its full sequence is ATP-dependent Clp protease proteolytic subunit 2 (214 aa).

Ser-110 serves as the catalytic Nucleophile. Residue His-135 is part of the active site.

Belongs to the peptidase S14 family. Fourteen ClpP subunits assemble into 2 heptameric rings which stack back to back to give a disk-like structure with a central cavity, resembling the structure of eukaryotic proteasomes.

The protein resides in the cytoplasm. It catalyses the reaction Hydrolysis of proteins to small peptides in the presence of ATP and magnesium. alpha-casein is the usual test substrate. In the absence of ATP, only oligopeptides shorter than five residues are hydrolyzed (such as succinyl-Leu-Tyr-|-NHMec, and Leu-Tyr-Leu-|-Tyr-Trp, in which cleavage of the -Tyr-|-Leu- and -Tyr-|-Trp bonds also occurs).. Cleaves peptides in various proteins in a process that requires ATP hydrolysis. Has a chymotrypsin-like activity. Plays a major role in the degradation of misfolded proteins. This chain is ATP-dependent Clp protease proteolytic subunit 2, found in Mycobacterium leprae (strain TN).